A 78-amino-acid chain; its full sequence is Acyl carrier protein (78 aa).

The Carrier domain maps to 2–77 (SDSAEKVKKI…DAIDYIEANK (76 aa)). O-(pantetheine 4'-phosphoryl)serine is present on S37.

The protein belongs to the acyl carrier protein (ACP) family. 4'-phosphopantetheine is transferred from CoA to a specific serine of apo-ACP by AcpS. This modification is essential for activity because fatty acids are bound in thioester linkage to the sulfhydryl of the prosthetic group.

It is found in the cytoplasm. The protein operates within lipid metabolism; fatty acid biosynthesis. Its function is as follows. Carrier of the growing fatty acid chain in fatty acid biosynthesis. In Sphingopyxis alaskensis (strain DSM 13593 / LMG 18877 / RB2256) (Sphingomonas alaskensis), this protein is Acyl carrier protein.